A 430-amino-acid polypeptide reads, in one-letter code: Asparagine--tRNA ligase (430 aa).

This sequence belongs to the class-II aminoacyl-tRNA synthetase family. Homodimer.

It localises to the cytoplasm. The catalysed reaction is tRNA(Asn) + L-asparagine + ATP = L-asparaginyl-tRNA(Asn) + AMP + diphosphate + H(+). This chain is Asparagine--tRNA ligase, found in Staphylococcus aureus (strain bovine RF122 / ET3-1).